The sequence spans 363 residues: uncharacterized protein (363 aa).

Transmembrane regions (helical) follow at residues 20–40, 63–83, 101–121, 141–161, 186–206, 227–247, and 268–288; these read WFFT…NTNI, INFA…FLVM, FPLI…GVQS, SVWQ…FTAF, FSLL…IMLA, IFKY…CVVL, and FLIV…WYVL. Residues 329–363 form a disordered region; that stretch reads PRADLTPNDTLHMESKKKPLSQSPRVVIEEEDVAE.

The protein localises to the membrane. This is an uncharacterized protein from Caenorhabditis elegans.